Reading from the N-terminus, the 368-residue chain is tRNA-specific 2-thiouridylase MnmA (368 aa).

Residues 12-19 and Met38 contribute to the ATP site; that span reads AMSGGVDS. The active-site Nucleophile is the Cys110. Cys110 and Cys207 are joined by a disulfide. Residue Gly134 coordinates ATP. The interaction with tRNA stretch occupies residues 157–159; sequence KDQ. Cys207 functions as the Cysteine persulfide intermediate in the catalytic mechanism. An interaction with tRNA region spans residues 312 to 313; sequence RY.

Belongs to the MnmA/TRMU family.

Its subcellular location is the cytoplasm. The enzyme catalyses S-sulfanyl-L-cysteinyl-[protein] + uridine(34) in tRNA + AH2 + ATP = 2-thiouridine(34) in tRNA + L-cysteinyl-[protein] + A + AMP + diphosphate + H(+). Catalyzes the 2-thiolation of uridine at the wobble position (U34) of tRNA, leading to the formation of s(2)U34. The chain is tRNA-specific 2-thiouridylase MnmA from Geobacter metallireducens (strain ATCC 53774 / DSM 7210 / GS-15).